The chain runs to 582 residues: Dihydroxy-acid dehydratase 3 (582 aa).

Cysteine 67 is a [2Fe-2S] cluster binding site. Aspartate 99 contacts Mg(2+). Cysteine 140 is a binding site for [2Fe-2S] cluster. Positions 141 and 142 each coordinate Mg(2+). An N6-carboxylysine modification is found at lysine 142. Cysteine 212 is a binding site for [2Fe-2S] cluster. Mg(2+) is bound at residue glutamate 462. Residue serine 488 is the Proton acceptor of the active site.

This sequence belongs to the IlvD/Edd family. In terms of assembly, homodimer. [2Fe-2S] cluster serves as cofactor. Mg(2+) is required as a cofactor.

The enzyme catalyses (2R)-2,3-dihydroxy-3-methylbutanoate = 3-methyl-2-oxobutanoate + H2O. The catalysed reaction is (2R,3R)-2,3-dihydroxy-3-methylpentanoate = (S)-3-methyl-2-oxopentanoate + H2O. The protein operates within amino-acid biosynthesis; L-isoleucine biosynthesis; L-isoleucine from 2-oxobutanoate: step 3/4. Its pathway is amino-acid biosynthesis; L-valine biosynthesis; L-valine from pyruvate: step 3/4. Functions in the biosynthesis of branched-chain amino acids. Catalyzes the dehydration of (2R,3R)-2,3-dihydroxy-3-methylpentanoate (2,3-dihydroxy-3-methylvalerate) into 2-oxo-3-methylpentanoate (2-oxo-3-methylvalerate) and of (2R)-2,3-dihydroxy-3-methylbutanoate (2,3-dihydroxyisovalerate) into 2-oxo-3-methylbutanoate (2-oxoisovalerate), the penultimate precursor to L-isoleucine and L-valine, respectively. This Bradyrhizobium diazoefficiens (strain JCM 10833 / BCRC 13528 / IAM 13628 / NBRC 14792 / USDA 110) protein is Dihydroxy-acid dehydratase 3.